The following is a 271-amino-acid chain: Undecaprenyl-diphosphatase 2 (271 aa).

Helical transmembrane passes span 1–21 (MNFFQAIILAIAQGVSELFPI), 46–66 (NFLEFVVMMHIGTTISLIVYF), 88–108 (ALIVIGTIPAIILGAIFEQTI), 111–131 (AFSDVIVASIFLIFNGLLLFF), 146–166 (LKGWQALVIGCFQSLALIPGF), 190–210 (SMLLSTPMVAGAATLEIPKLI), 220–240 (LSLIGGIVAGLAAFLSIYILM), and 251–271 (MLPFAIYCIVIGIGVLASKAI).

Belongs to the UppP family.

Its subcellular location is the cell membrane. It catalyses the reaction di-trans,octa-cis-undecaprenyl diphosphate + H2O = di-trans,octa-cis-undecaprenyl phosphate + phosphate + H(+). Catalyzes the dephosphorylation of undecaprenyl diphosphate (UPP). Confers resistance to bacitracin. This is Undecaprenyl-diphosphatase 2 from Oenococcus oeni (strain ATCC BAA-331 / PSU-1).